A 387-amino-acid chain; its full sequence is S-adenosylmethionine synthase (387 aa).

H15 contacts ATP. Residue D17 coordinates Mg(2+). E43 contributes to the K(+) binding site. L-methionine-binding residues include E56 and Q99. Positions 99-109 (QSPDIAQGVNR) are flexible loop. ATP contacts are provided by residues 166–168 (DAK), 232–233 (RF), D241, 247–248 (RK), A264, and K268. D241 is an L-methionine binding site. L-methionine is bound at residue K272.

This sequence belongs to the AdoMet synthase family. Homotetramer; dimer of dimers. Requires Mg(2+) as cofactor. It depends on K(+) as a cofactor.

The protein resides in the cytoplasm. The enzyme catalyses L-methionine + ATP + H2O = S-adenosyl-L-methionine + phosphate + diphosphate. It functions in the pathway amino-acid biosynthesis; S-adenosyl-L-methionine biosynthesis; S-adenosyl-L-methionine from L-methionine: step 1/1. In terms of biological role, catalyzes the formation of S-adenosylmethionine (AdoMet) from methionine and ATP. The overall synthetic reaction is composed of two sequential steps, AdoMet formation and the subsequent tripolyphosphate hydrolysis which occurs prior to release of AdoMet from the enzyme. The protein is S-adenosylmethionine synthase of Nitrosomonas europaea (strain ATCC 19718 / CIP 103999 / KCTC 2705 / NBRC 14298).